The sequence spans 424 residues: Histidine--tRNA ligase (424 aa).

Belongs to the class-II aminoacyl-tRNA synthetase family. As to quaternary structure, homodimer.

The protein resides in the cytoplasm. It catalyses the reaction tRNA(His) + L-histidine + ATP = L-histidyl-tRNA(His) + AMP + diphosphate + H(+). This chain is Histidine--tRNA ligase, found in Shigella flexneri.